Consider the following 548-residue polypeptide: MAAKDVKFSGDARQRMLRGVDILADAVKVTLGPKGRNVVIERSFGAPRITKDGVTVAKEIELEDRFENMGAQMVREVASKTNDLAGDGTTTATVLAQAIVREGAKAVAAGMNPMDLKRGIDIAVAAVVKDIGKRAKAVASSAEVAQVGTISSNGDASIGKMIAQAMQKVGNDGVITVEENKSLETDVDIVEGMKFDRGYLSPYFVTNAEKMAAELDDAYILLHEKKLTGLQALLPVLEAVVKSGKPLLIVAEDVEGEALAALVVNRLRGGLKVAAVKAPGFGDRRKAMLEDIAILTSGQLISDELGMKLENVTLNMLGRAKKVLIDKENTTIVNGAGKKKDIEARVGQIRARIEETTSDYDREKLQERLAKLAGGVAVIRVGGATEIEVKEKKDRVEDALNATRAAVEEGIVPGGGTALLRARKAVGRINNDNSDVQAGINIVLKALEAPIRQIAENAGVEGSIVVGKILENKTETFGFDAQKEEYVDMVAKGIIDPAKVVRTALQDASSIAGLLVTTEAMVAELPKDEPPAMPAGGGGMGGMGGMGF.

ATP is bound by residues 30–33, Lys-51, 87–91, Gly-415, and Asp-496; these read TLGP and DGTTT.

Belongs to the chaperonin (HSP60) family. Forms a cylinder of 14 subunits composed of two heptameric rings stacked back-to-back. Interacts with the co-chaperonin GroES.

It localises to the cytoplasm. It catalyses the reaction ATP + H2O + a folded polypeptide = ADP + phosphate + an unfolded polypeptide.. Its function is as follows. Together with its co-chaperonin GroES, plays an essential role in assisting protein folding. The GroEL-GroES system forms a nano-cage that allows encapsulation of the non-native substrate proteins and provides a physical environment optimized to promote and accelerate protein folding. The protein is Chaperonin GroEL 3 of Nitrobacter winogradskyi (strain ATCC 25391 / DSM 10237 / CIP 104748 / NCIMB 11846 / Nb-255).